Here is a 548-residue protein sequence, read N- to C-terminus: Glucose-6-phosphate isomerase (548 aa).

Glutamate 355 serves as the catalytic Proton donor. Active-site residues include histidine 386 and lysine 514.

It belongs to the GPI family.

Its subcellular location is the cytoplasm. It carries out the reaction alpha-D-glucose 6-phosphate = beta-D-fructose 6-phosphate. The protein operates within carbohydrate biosynthesis; gluconeogenesis. It functions in the pathway carbohydrate degradation; glycolysis; D-glyceraldehyde 3-phosphate and glycerone phosphate from D-glucose: step 2/4. Its function is as follows. Catalyzes the reversible isomerization of glucose-6-phosphate to fructose-6-phosphate. This is Glucose-6-phosphate isomerase from Photorhabdus laumondii subsp. laumondii (strain DSM 15139 / CIP 105565 / TT01) (Photorhabdus luminescens subsp. laumondii).